The primary structure comprises 156 residues: Small ribosomal subunit protein uS7 (156 aa).

This sequence belongs to the universal ribosomal protein uS7 family. As to quaternary structure, part of the 30S ribosomal subunit. Contacts proteins S9 and S11.

One of the primary rRNA binding proteins, it binds directly to 16S rRNA where it nucleates assembly of the head domain of the 30S subunit. Is located at the subunit interface close to the decoding center, probably blocks exit of the E-site tRNA. The protein is Small ribosomal subunit protein uS7 of Azoarcus sp. (strain BH72).